Consider the following 342-residue polypeptide: Phenylalanine--tRNA ligase alpha subunit (342 aa).

Glu255 contributes to the Mg(2+) binding site.

The protein belongs to the class-II aminoacyl-tRNA synthetase family. Phe-tRNA synthetase alpha subunit type 1 subfamily. As to quaternary structure, tetramer of two alpha and two beta subunits. Mg(2+) serves as cofactor.

Its subcellular location is the cytoplasm. It catalyses the reaction tRNA(Phe) + L-phenylalanine + ATP = L-phenylalanyl-tRNA(Phe) + AMP + diphosphate + H(+). The polypeptide is Phenylalanine--tRNA ligase alpha subunit (Pelodictyon phaeoclathratiforme (strain DSM 5477 / BU-1)).